We begin with the raw amino-acid sequence, 145 residues long: Small ribosomal subunit protein eS19 (145 aa).

At lysine 23 the chain carries N6-acetyllysine. Arginine 67 is subject to Omega-N-methylarginine. N6-acetyllysine occurs at positions 111 and 115. At lysine 143 the chain carries N6-succinyllysine.

Belongs to the eukaryotic ribosomal protein eS19 family. In terms of assembly, component of the small ribosomal subunit. Part of the small subunit (SSU) processome, composed of more than 70 proteins and the RNA chaperone small nucleolar RNA (snoRNA) U3. Interacts with RPS19BP1.

Its subcellular location is the cytoplasm. It is found in the nucleus. It localises to the nucleolus. In terms of biological role, component of the small ribosomal subunit. The ribosome is a large ribonucleoprotein complex responsible for the synthesis of proteins in the cell. Required for pre-rRNA processing and maturation of 40S ribosomal subunits. Part of the small subunit (SSU) processome, first precursor of the small eukaryotic ribosomal subunit. During the assembly of the SSU processome in the nucleolus, many ribosome biogenesis factors, an RNA chaperone and ribosomal proteins associate with the nascent pre-rRNA and work in concert to generate RNA folding, modifications, rearrangements and cleavage as well as targeted degradation of pre-ribosomal RNA by the RNA exosome. This Rattus norvegicus (Rat) protein is Small ribosomal subunit protein eS19 (Rps19).